The sequence spans 357 residues: Queuosine-tRNA galactosyltransferase (357 aa).

This sequence belongs to the glycosyltransferase 2 family.

The protein resides in the cytoplasm. The catalysed reaction is queuosine(34) in tRNA(Tyr) + UDP-alpha-D-galactose = O-5''-beta-D-galactosylqueuosine(34) in tRNA(Tyr) + UDP + H(+). Functionally, glycosyltransferase that specifically catalyzes galactosylation of cytoplasmic tRNA(Tyr) modified with queuosine at position 34 (queuosine(34)). Galactosylates the cyclopentene hydroxyl group of queuosine(34) in tRNA(Tyr) to form galactosyl-queuosine(34). Mannosylation of queuosine(34) in tRNA(Tyr) is required to slow-down elongation at cognate codons UAC and suppress stop codon readthrough, thereby regulating protein translation. The polypeptide is Queuosine-tRNA galactosyltransferase (Rattus norvegicus (Rat)).